A 20-amino-acid chain; its full sequence is Pregnancy-associated glycoprotein 57 (20 aa).

Belongs to the peptidase A1 family. Post-translationally, glycosylated.

The protein localises to the secreted. In Ovis aries (Sheep), this protein is Pregnancy-associated glycoprotein 57.